The primary structure comprises 379 residues: Chorismate synthase (379 aa).

NADP(+) is bound by residues arginine 48 and arginine 54. Residues 125-127 (RSS), 241-242 (NA), glycine 286, 301-305 (KPTSS), and arginine 327 each bind FMN.

This sequence belongs to the chorismate synthase family. Homotetramer. It depends on FMNH2 as a cofactor.

The catalysed reaction is 5-O-(1-carboxyvinyl)-3-phosphoshikimate = chorismate + phosphate. The protein operates within metabolic intermediate biosynthesis; chorismate biosynthesis; chorismate from D-erythrose 4-phosphate and phosphoenolpyruvate: step 7/7. In terms of biological role, catalyzes the anti-1,4-elimination of the C-3 phosphate and the C-6 proR hydrogen from 5-enolpyruvylshikimate-3-phosphate (EPSP) to yield chorismate, which is the branch point compound that serves as the starting substrate for the three terminal pathways of aromatic amino acid biosynthesis. This reaction introduces a second double bond into the aromatic ring system. This is Chorismate synthase from Rhodospirillum centenum (strain ATCC 51521 / SW).